Reading from the N-terminus, the 265-residue chain is MSRLEAAVNGKKNLFIPFITAGDPNPEVTIELALTLEEAGADILELGIPYSDPLADGPVIQAASKRALKHEMTLEKALSLVPKMRAQGLTIPVIVFTYVNPLLQYGEEQFVKRAADYQVDGILVPDMPFEEGEVLQAACQEHNLSLISLVAPTSNKRIEKIAARAQGFVYCVSSLGVTGLRDELDPRVHEFLQTVKTHASVPVVVGFGISRREQVEALAENADGVVVGSAIVKLVGELEDELNDPEKLEDGLFKIKRFVSELISS.

Active-site proton acceptor residues include E45 and D56.

The protein belongs to the TrpA family. Tetramer of two alpha and two beta chains.

It catalyses the reaction (1S,2R)-1-C-(indol-3-yl)glycerol 3-phosphate + L-serine = D-glyceraldehyde 3-phosphate + L-tryptophan + H2O. It participates in amino-acid biosynthesis; L-tryptophan biosynthesis; L-tryptophan from chorismate: step 5/5. In terms of biological role, the alpha subunit is responsible for the aldol cleavage of indoleglycerol phosphate to indole and glyceraldehyde 3-phosphate. The protein is Tryptophan synthase alpha chain of Halalkalibacterium halodurans (strain ATCC BAA-125 / DSM 18197 / FERM 7344 / JCM 9153 / C-125) (Bacillus halodurans).